The chain runs to 547 residues: T-complex protein 1 subunit gamma (547 aa).

Gly41 contacts ADP. Position 41 (Gly41) interacts with ATP. Asp92 provides a ligand contact to Mg(2+). Gly93, Thr94, Thr95, Ser96, Thr161, and Lys162 together coordinate ADP. Gly93, Thr94, and Thr95 together coordinate ATP. Cys365 and Cys371 form a disulfide bridge. 5 residues coordinate ADP: Gly410, Gly481, Glu482, Glu496, and Lys501. Positions 410 and 481 each coordinate ATP. ATP is bound at residue Glu496. A compositionally biased stretch (basic and acidic residues) spans His525–Arg534. The disordered stretch occupies residues His525–Glu547. Residues Gln535–Glu547 are compositionally biased toward low complexity.

This sequence belongs to the TCP-1 chaperonin family. Component of the chaperonin-containing T-complex (TRiC), a hexadecamer composed of two identical back-to-back stacked rings enclosing a protein folding chamber. Each ring is made up of eight different subunits: TCP1/CCT1, CCT2, CCT3, CCT4, CCT5, CCT6A/CCT6, CCT7, CCT8.

Its subcellular location is the cytoplasm. It catalyses the reaction ATP + H2O = ADP + phosphate + H(+). Its function is as follows. Component of the chaperonin-containing T-complex (TRiC), a molecular chaperone complex that assists the folding of actin, tubulin and other proteins upon ATP hydrolysis. This chain is T-complex protein 1 subunit gamma (cct3), found in Xenopus laevis (African clawed frog).